A 109-amino-acid polypeptide reads, in one-letter code: N-cym protein (109 aa).

As to quaternary structure, interacts with MYCN and GSK3B. As to expression, expressed in the neuronal cells of the cerebrum and cerebellum, spermatocytes of the testis, pancreatic cells and also the heart. Expressed in both primary and metastatic neuroblastomas and in thyroid tumors (at protein level). Expression is associated with poor prognosis in neuroblastoma. Expressed in the fetal brain, lung, liver and kidney at varying low levels.

It is found in the cytoplasm. The protein resides in the nucleus. Functionally, regulates stability of MYCN in neuroblastoma cells by inhibiting GSK3B-mediated MYCN phosphorylation. Inhibits GSK3B activity by promoting its phosphorylation at 'Ser-9'. This chain is N-cym protein (MYCNOS), found in Homo sapiens (Human).